The chain runs to 162 residues: N5-carboxyaminoimidazole ribonucleotide mutase (162 aa).

Substrate contacts are provided by Ser-11, Asp-14, and Arg-41.

The protein belongs to the AIR carboxylase family. Class I subfamily.

The catalysed reaction is 5-carboxyamino-1-(5-phospho-D-ribosyl)imidazole + H(+) = 5-amino-1-(5-phospho-D-ribosyl)imidazole-4-carboxylate. Its pathway is purine metabolism; IMP biosynthesis via de novo pathway; 5-amino-1-(5-phospho-D-ribosyl)imidazole-4-carboxylate from 5-amino-1-(5-phospho-D-ribosyl)imidazole (N5-CAIR route): step 2/2. Functionally, catalyzes the conversion of N5-carboxyaminoimidazole ribonucleotide (N5-CAIR) to 4-carboxy-5-aminoimidazole ribonucleotide (CAIR). The chain is N5-carboxyaminoimidazole ribonucleotide mutase from Brucella melitensis biotype 1 (strain ATCC 23456 / CCUG 17765 / NCTC 10094 / 16M).